Here is a 90-residue protein sequence, read N- to C-terminus: Small ribosomal subunit protein uS15c (90 aa).

This sequence belongs to the universal ribosomal protein uS15 family. Part of the 30S ribosomal subunit.

It localises to the plastid. It is found in the chloroplast. This chain is Small ribosomal subunit protein uS15c (rps15), found in Morus indica (Mulberry).